The primary structure comprises 263 residues: Hydroxyethylthiazole kinase 1 (263 aa).

Met42 contributes to the substrate binding site. ATP contacts are provided by Lys118 and Thr164. Gly191 lines the substrate pocket.

The protein belongs to the Thz kinase family. The cofactor is Mg(2+).

The catalysed reaction is 5-(2-hydroxyethyl)-4-methylthiazole + ATP = 4-methyl-5-(2-phosphooxyethyl)-thiazole + ADP + H(+). It functions in the pathway cofactor biosynthesis; thiamine diphosphate biosynthesis; 4-methyl-5-(2-phosphoethyl)-thiazole from 5-(2-hydroxyethyl)-4-methylthiazole: step 1/1. Its function is as follows. Catalyzes the phosphorylation of the hydroxyl group of 4-methyl-5-beta-hydroxyethylthiazole (THZ). The chain is Hydroxyethylthiazole kinase 1 from Clostridium botulinum (strain Langeland / NCTC 10281 / Type F).